The sequence spans 176 residues: NAD(P)H-quinone oxidoreductase subunit I, chloroplastic (176 aa).

4Fe-4S ferredoxin-type domains follow at residues 55 to 84 and 95 to 124; these read GRIHFEFDKCIACEVCVRVCPIDLPVVDWE and LNYSIDFGICIFCGNCVEYCPTNCLSMTEE. Residues C64, C67, C70, C74, C104, C107, C110, and C114 each contribute to the [4Fe-4S] cluster site.

This sequence belongs to the complex I 23 kDa subunit family. NDH is composed of at least 16 different subunits, 5 of which are encoded in the nucleus. Requires [4Fe-4S] cluster as cofactor.

The protein localises to the plastid. It is found in the chloroplast thylakoid membrane. The catalysed reaction is a plastoquinone + NADH + (n+1) H(+)(in) = a plastoquinol + NAD(+) + n H(+)(out). It catalyses the reaction a plastoquinone + NADPH + (n+1) H(+)(in) = a plastoquinol + NADP(+) + n H(+)(out). In terms of biological role, NDH shuttles electrons from NAD(P)H:plastoquinone, via FMN and iron-sulfur (Fe-S) centers, to quinones in the photosynthetic chain and possibly in a chloroplast respiratory chain. The immediate electron acceptor for the enzyme in this species is believed to be plastoquinone. Couples the redox reaction to proton translocation, and thus conserves the redox energy in a proton gradient. This Populus alba (White poplar) protein is NAD(P)H-quinone oxidoreductase subunit I, chloroplastic.